A 461-amino-acid chain; its full sequence is Argininosuccinate lyase (461 aa).

The protein belongs to the lyase 1 family. Argininosuccinate lyase subfamily. As to quaternary structure, homotetramer.

Its subcellular location is the cytoplasm. The enzyme catalyses 2-(N(omega)-L-arginino)succinate = fumarate + L-arginine. The protein operates within amino-acid biosynthesis; L-arginine biosynthesis; L-arginine from L-ornithine and carbamoyl phosphate: step 3/3. In Nostoc punctiforme (strain ATCC 29133 / PCC 73102), this protein is Argininosuccinate lyase.